Reading from the N-terminus, the 226-residue chain is Phosphatidylserine decarboxylase proenzyme (226 aa).

Ser184 (schiff-base intermediate with substrate; via pyruvic acid) is an active-site residue. Ser184 is subject to Pyruvic acid (Ser); by autocatalysis.

The protein belongs to the phosphatidylserine decarboxylase family. PSD-A subfamily. As to quaternary structure, heterodimer of a large membrane-associated beta subunit and a small pyruvoyl-containing alpha subunit. Pyruvate serves as cofactor. In terms of processing, is synthesized initially as an inactive proenzyme. Formation of the active enzyme involves a self-maturation process in which the active site pyruvoyl group is generated from an internal serine residue via an autocatalytic post-translational modification. Two non-identical subunits are generated from the proenzyme in this reaction, and the pyruvate is formed at the N-terminus of the alpha chain, which is derived from the carboxyl end of the proenzyme. The post-translation cleavage follows an unusual pathway, termed non-hydrolytic serinolysis, in which the side chain hydroxyl group of the serine supplies its oxygen atom to form the C-terminus of the beta chain, while the remainder of the serine residue undergoes an oxidative deamination to produce ammonia and the pyruvoyl prosthetic group on the alpha chain.

Its subcellular location is the cell membrane. The enzyme catalyses a 1,2-diacyl-sn-glycero-3-phospho-L-serine + H(+) = a 1,2-diacyl-sn-glycero-3-phosphoethanolamine + CO2. It participates in phospholipid metabolism; phosphatidylethanolamine biosynthesis; phosphatidylethanolamine from CDP-diacylglycerol: step 2/2. Functionally, catalyzes the formation of phosphatidylethanolamine (PtdEtn) from phosphatidylserine (PtdSer). The protein is Phosphatidylserine decarboxylase proenzyme of Ehrlichia canis (strain Jake).